Here is a 468-residue protein sequence, read N- to C-terminus: Adenosylhomocysteinase (468 aa).

Positions 57, 132, and 194 each coordinate substrate. An NAD(+)-binding site is contributed by 195–197 (TTT). Residues Lys224 and Asp228 each contribute to the substrate site. Residues Asn229, 258-263 (GFGDVG), Glu281, Asn316, 337-339 (IGH), and Asn382 each bind NAD(+).

It belongs to the adenosylhomocysteinase family. The cofactor is NAD(+).

It is found in the cytoplasm. The enzyme catalyses S-adenosyl-L-homocysteine + H2O = L-homocysteine + adenosine. Its pathway is amino-acid biosynthesis; L-homocysteine biosynthesis; L-homocysteine from S-adenosyl-L-homocysteine: step 1/1. Functionally, may play a key role in the regulation of the intracellular concentration of adenosylhomocysteine. This chain is Adenosylhomocysteinase, found in Methylobacterium nodulans (strain LMG 21967 / CNCM I-2342 / ORS 2060).